A 349-amino-acid chain; its full sequence is Magnesium-protoporphyrin IX monomethyl ester [oxidative] cyclase (349 aa).

A disordered region spans residues 1–22 (MTATASASSVSGSLGRNELPPH).

It belongs to the AcsF family. Requires Fe cation as cofactor.

The catalysed reaction is Mg-protoporphyrin IX 13-monomethyl ester + 3 NADPH + 3 O2 + 2 H(+) = 3,8-divinyl protochlorophyllide a + 3 NADP(+) + 5 H2O. It functions in the pathway porphyrin-containing compound metabolism; chlorophyll biosynthesis (light-independent). In terms of biological role, catalyzes the formation of the isocyclic ring in chlorophyll biosynthesis. Mediates the cyclase reaction, which results in the formation of divinylprotochlorophyllide (Pchlide) characteristic of all chlorophylls from magnesium-protoporphyrin IX 13-monomethyl ester (MgPMME). The protein is Magnesium-protoporphyrin IX monomethyl ester [oxidative] cyclase of Prochlorococcus marinus (strain MIT 9211).